The primary structure comprises 64 residues: Large ribosomal subunit protein bL35 (64 aa).

The protein belongs to the bacterial ribosomal protein bL35 family.

The sequence is that of Large ribosomal subunit protein bL35 from Shewanella baltica (strain OS223).